Reading from the N-terminus, the 324-residue chain is HPr kinase/phosphorylase (324 aa).

Residues H146 and K167 contribute to the active site. An ATP-binding site is contributed by 161–168 (GDSGLGKS). S168 is a Mg(2+) binding site. The active-site Proton acceptor; for phosphorylation activity. Proton donor; for dephosphorylation activity is the D185. The tract at residues 209–218 (LEVRGLGLLD) is important for the catalytic mechanism of both phosphorylation and dephosphorylation. E210 is a Mg(2+) binding site. The active site involves R250. Residues 271–276 (QVAAGR) form an important for the catalytic mechanism of dephosphorylation region.

It belongs to the HPrK/P family. Homohexamer. Requires Mg(2+) as cofactor.

It carries out the reaction [HPr protein]-L-serine + ATP = [HPr protein]-O-phospho-L-serine + ADP + H(+). The catalysed reaction is [HPr protein]-O-phospho-L-serine + phosphate + H(+) = [HPr protein]-L-serine + diphosphate. Its function is as follows. Catalyzes the ATP- as well as the pyrophosphate-dependent phosphorylation of a specific serine residue in HPr, a phosphocarrier protein of the phosphoenolpyruvate-dependent sugar phosphotransferase system (PTS). HprK/P also catalyzes the pyrophosphate-producing, inorganic phosphate-dependent dephosphorylation (phosphorolysis) of seryl-phosphorylated HPr (P-Ser-HPr). This is HPr kinase/phosphorylase from Ralstonia pickettii (strain 12J).